Here is a 132-residue protein sequence, read N- to C-terminus: Small ribosomal subunit protein uS8 (132 aa).

The protein belongs to the universal ribosomal protein uS8 family. In terms of assembly, part of the 30S ribosomal subunit. Contacts proteins S5 and S12.

Functionally, one of the primary rRNA binding proteins, it binds directly to 16S rRNA central domain where it helps coordinate assembly of the platform of the 30S subunit. The polypeptide is Small ribosomal subunit protein uS8 (Rickettsia bellii (strain OSU 85-389)).